The primary structure comprises 298 residues: Acetylglutamate kinase (298 aa).

Residues 67–68 (GG), R89, and N193 each bind substrate.

The protein belongs to the acetylglutamate kinase family. ArgB subfamily.

Its subcellular location is the cytoplasm. The catalysed reaction is N-acetyl-L-glutamate + ATP = N-acetyl-L-glutamyl 5-phosphate + ADP. The protein operates within amino-acid biosynthesis; L-arginine biosynthesis; N(2)-acetyl-L-ornithine from L-glutamate: step 2/4. Its function is as follows. Catalyzes the ATP-dependent phosphorylation of N-acetyl-L-glutamate. The protein is Acetylglutamate kinase of Desulfitobacterium hafniense (strain DSM 10664 / DCB-2).